The sequence spans 47 residues: Defensin NsD7 (47 aa).

4 disulfides stabilise this stretch: Cys-3/Cys-47, Cys-14/Cys-34, Cys-20/Cys-41, and Cys-24/Cys-43. Lys-4, His-33, Lys-36, and Arg-39 together coordinate a 1,2-diacyl-sn-glycero-3-phosphate.

The protein belongs to the DEFL family. In terms of assembly, in the presence of phosphatidic acid (PA), forms right-handed double helices which tend to bundle into fibrils. Each helix is a repetition of dimers containing 2 bound molecules of PA per dimer. Dimers are arranged orthogonally in a tip-to-tip configuration with 1 molecule of PA located at the dimer contact interface. Association of 2 helices to form a double helix depends on intercalating isoleucine residues Ile-15 and Ile-37. Bundling of double helices into fibrils depends on Arg-26.

The protein resides in the vacuole. Plant defense peptide. Disrupts membranes containing phosphatidic acid (PA) via a PA-dependent oligomerization process. The sequence is that of Defensin NsD7 from Nicotiana suaveolens (Australian tobacco).